The chain runs to 329 residues: Biotin synthase (329 aa).

The region spanning 38-262 (NTIQVSTLLS…IMPYSYIRLS (225 aa)) is the Radical SAM core domain. 3 residues coordinate [4Fe-4S] cluster: cysteine 53, cysteine 57, and cysteine 60. The [2Fe-2S] cluster site is built by cysteine 97, cysteine 128, cysteine 188, and arginine 260.

The protein belongs to the radical SAM superfamily. Biotin synthase family. In terms of assembly, homodimer. [4Fe-4S] cluster serves as cofactor. The cofactor is [2Fe-2S] cluster.

It catalyses the reaction (4R,5S)-dethiobiotin + (sulfur carrier)-SH + 2 reduced [2Fe-2S]-[ferredoxin] + 2 S-adenosyl-L-methionine = (sulfur carrier)-H + biotin + 2 5'-deoxyadenosine + 2 L-methionine + 2 oxidized [2Fe-2S]-[ferredoxin]. It participates in cofactor biosynthesis; biotin biosynthesis; biotin from 7,8-diaminononanoate: step 2/2. In terms of biological role, catalyzes the conversion of dethiobiotin (DTB) to biotin by the insertion of a sulfur atom into dethiobiotin via a radical-based mechanism. This chain is Biotin synthase, found in Acinetobacter baylyi (strain ATCC 33305 / BD413 / ADP1).